The primary structure comprises 97 residues: uncharacterized protein (97 aa).

A compositionally biased stretch (basic and acidic residues) spans 1–20 (MAKEQTDRTTLDLFAHERRP). Residues 1 to 30 (MAKEQTDRTTLDLFAHERRPGRPKTNPLSR) are disordered.

This is an uncharacterized protein from Escherichia coli O157:H7.